A 312-amino-acid chain; its full sequence is DNA-directed RNA polymerase subunit alpha (312 aa).

The interval Met-1–Thr-229 is alpha N-terminal domain (alpha-NTD). Positions Pro-240–Val-312 are alpha C-terminal domain (alpha-CTD).

It belongs to the RNA polymerase alpha chain family. In cyanobacteria the RNAP catalytic core is composed of 2 alpha, 1 beta, 1 beta', 1 gamma and 1 omega subunit. When a sigma factor is associated with the core the holoenzyme is formed, which can initiate transcription.

The catalysed reaction is RNA(n) + a ribonucleoside 5'-triphosphate = RNA(n+1) + diphosphate. In terms of biological role, DNA-dependent RNA polymerase catalyzes the transcription of DNA into RNA using the four ribonucleoside triphosphates as substrates. The protein is DNA-directed RNA polymerase subunit alpha of Prochlorococcus marinus (strain AS9601).